The primary structure comprises 122 residues: Large ribosomal subunit protein uL14 (122 aa).

This sequence belongs to the universal ribosomal protein uL14 family. Part of the 50S ribosomal subunit. Forms a cluster with proteins L3 and L19. In the 70S ribosome, L14 and L19 interact and together make contacts with the 16S rRNA in bridges B5 and B8.

Binds to 23S rRNA. Forms part of two intersubunit bridges in the 70S ribosome. This is Large ribosomal subunit protein uL14 from Bacillus cytotoxicus (strain DSM 22905 / CIP 110041 / 391-98 / NVH 391-98).